The chain runs to 79 residues: MHMPSGTQWLIILLIVVLLFGAKKIPELAKGLGKGIKTFKDEMNTEDDKKITQEDAQKIEKINEKDILAKENNEEVKKA.

Residues 1–21 (MHMPSGTQWLIILLIVVLLFG) traverse the membrane as a helical segment.

It belongs to the TatA/E family. The Tat system comprises two distinct complexes: a TatABC complex, containing multiple copies of TatA, TatB and TatC subunits, and a separate TatA complex, containing only TatA subunits. Substrates initially bind to the TatABC complex, which probably triggers association of the separate TatA complex to form the active translocon.

It is found in the cell inner membrane. Functionally, part of the twin-arginine translocation (Tat) system that transports large folded proteins containing a characteristic twin-arginine motif in their signal peptide across membranes. TatA could form the protein-conducting channel of the Tat system. This Campylobacter lari (strain RM2100 / D67 / ATCC BAA-1060) protein is Sec-independent protein translocase protein TatA.